The chain runs to 148 residues: Transcription antitermination protein NusB (148 aa).

This sequence belongs to the NusB family.

Its function is as follows. Involved in transcription antitermination. Required for transcription of ribosomal RNA (rRNA) genes. Binds specifically to the boxA antiterminator sequence of the ribosomal RNA (rrn) operons. This chain is Transcription antitermination protein NusB, found in Aquifex aeolicus (strain VF5).